The primary structure comprises 235 residues: Large ribosomal subunit protein uL1 (235 aa).

It belongs to the universal ribosomal protein uL1 family. In terms of assembly, part of the 50S ribosomal subunit.

Binds directly to 23S rRNA. The L1 stalk is quite mobile in the ribosome, and is involved in E site tRNA release. Its function is as follows. Protein L1 is also a translational repressor protein, it controls the translation of the L11 operon by binding to its mRNA. In Fervidobacterium nodosum (strain ATCC 35602 / DSM 5306 / Rt17-B1), this protein is Large ribosomal subunit protein uL1.